A 147-amino-acid polypeptide reads, in one-letter code: Large ribosomal subunit protein uL15 (147 aa).

The segment at 20–54 (GRGIGSGKGKTSGKGHKGQKARGTGKVHPWFEGGQ) is disordered. Residues 30–44 (TSGKGHKGQKARGTG) show a composition bias toward basic residues.

The protein belongs to the universal ribosomal protein uL15 family. As to quaternary structure, part of the 50S ribosomal subunit.

Functionally, binds to the 23S rRNA. This Thermosipho africanus (strain TCF52B) protein is Large ribosomal subunit protein uL15.